A 100-amino-acid chain; its full sequence is Defensin-B4 (100 aa).

Residues 1–22 form the signal peptide; sequence MRASLLLFILLVYLAHAPQAQG. Residues 23–26 constitute a propeptide that is removed on maturation; the sequence is VFGP. Disulfide bonds link Cys-29/Cys-56, Cys-36/Cys-50, and Cys-40/Cys-57. The interval 60–100 is disordered; sequence STGTSSSQGSHEVPVINSEPALESKPEPQDTQEEEATMVSE. Residues 89-100 are compositionally biased toward acidic residues; the sequence is DTQEEEATMVSE.

Belongs to the beta-defensin family. Highly expressed in kidney, lowly expressed in spleen, and expressed at lower levels in lung.

Its subcellular location is the secreted. Its function is as follows. Has antimicrobial activity. The chain is Defensin-B4 from Ornithorhynchus anatinus (Duckbill platypus).